The primary structure comprises 190 residues: Double zinc ribbon protein MJ0416 (190 aa).

The segment at 134–183 adopts a DZANK-type zinc-finger fold; sequence CPNCNNYISDSWKYCAHCGAKLKEEEEEVLRCPNCKRPVQPEWIVCPYCG.

The polypeptide is Double zinc ribbon protein MJ0416 (Methanocaldococcus jannaschii (strain ATCC 43067 / DSM 2661 / JAL-1 / JCM 10045 / NBRC 100440) (Methanococcus jannaschii)).